Consider the following 374-residue polypeptide: Type IV secretion system protein PtlG (374 aa).

A helical transmembrane segment spans residues 38-56 (WMFALVAVALSCLLATGIW). The segment at 86-117 (HPREPEPAPLPDMPAAPDPILPQPRPAPPVPP) is disordered. Residues 92–117 (PAPLPDMPAAPDPILPQPRPAPPVPP) show a composition bias toward pro residues.

Belongs to the TrbI/VirB10 family.

The protein localises to the cell membrane. In terms of biological role, component of the type IV secretion system ptl required for secretion of assembled pertussis toxin (PTX) through the outer membrane. This is Type IV secretion system protein PtlG (ptlG) from Bordetella pertussis (strain Tohama I / ATCC BAA-589 / NCTC 13251).